Reading from the N-terminus, the 61-residue chain is Large ribosomal subunit protein bL28 (61 aa).

The segment at Met1–Arg26 is disordered. Basic residues predominate over residues Lys9–His19.

This sequence belongs to the bacterial ribosomal protein bL28 family.

In Levilactobacillus brevis (strain ATCC 367 / BCRC 12310 / CIP 105137 / JCM 1170 / LMG 11437 / NCIMB 947 / NCTC 947) (Lactobacillus brevis), this protein is Large ribosomal subunit protein bL28.